The sequence spans 373 residues: Ribonuclease D (373 aa).

The 3'-5' exonuclease domain occupies 3-171 (YQLITTDAGL…MAKRLVQETE (169 aa)). The 80-residue stretch at 210–289 (RPRQLGCLQK…AEAAELEESA (80 aa)) folds into the HRDC domain.

Belongs to the RNase D family. A divalent metal cation is required as a cofactor.

Its subcellular location is the cytoplasm. The catalysed reaction is Exonucleolytic cleavage that removes extra residues from the 3'-terminus of tRNA to produce 5'-mononucleotides.. Exonuclease involved in the 3' processing of various precursor tRNAs. Initiates hydrolysis at the 3'-terminus of an RNA molecule and releases 5'-mononucleotides. The chain is Ribonuclease D from Serratia proteamaculans (strain 568).